Here is a 1001-residue protein sequence, read N- to C-terminus: X-linked retinitis pigmentosa GTPase regulator (1001 aa).

6 RCC1 repeats span residues 54–105 (NKLY…STDT), 106–158 (GGVY…LTED), 159–208 (GKLF…VTMD), 209–261 (GELY…LTEK), 262–313 (VVYA…MTEL), and 314–367 (GLLY…FATP). The segment at 404–428 (SLSARLRRRERERPPCSASMVGTLP) is disordered. Ser-518 carries the post-translational modification Phosphoserine. 2 stretches are compositionally biased toward basic and acidic residues: residues 631-641 (KKIRESEENSK) and 659-671 (EDNK…RRSS). 4 disordered regions span residues 631-738 (KKIR…WYDR), 794-869 (NLEF…EGSE), 902-925 (PKGH…DPTS), and 962-1001 (GDQI…CTIL). Composition is skewed to acidic residues over residues 679-691 (SETE…DSYM) and 717-731 (EKDE…EVET). 3 stretches are compositionally biased toward basic and acidic residues: residues 794 to 818 (NLEF…EKEA), 847 to 857 (EERKEGEKEIV), and 902 to 911 (PKGHMYDRVK). The span at 976–1001 (QNHMGQNLQDSTTPNMEGKSKSCTIL) shows a compositional bias: polar residues. Residue Cys-998 is modified to Cysteine methyl ester. Cys-998 carries S-geranylgeranyl cysteine lipidation. Positions 999–1001 (TIL) are cleaved as a propeptide — removed in mature form.

As to quaternary structure, interacts with SPATA7. Interacts with PDE6D. Interacts with RPGRIP1 and RPGRIP1L; PDE6D, RPGRIP1 and RPGRIP1L may compete for the same binding sites. Interacts with NPM1. Interacts with PDE6D. Isoform 5 interacts (via N-terminus) with SMC1A and SMC3. Isoform 5 interacts with CEP290. Interacts with WHRN. Interacts with RAB37 and RAB8A (in GDP-bound forms); functions as GEF for RAB37 and RAB8A. Post-translationally, prenylated. Expressed in the retina (at protein level). Located mainly in the connecting cilia between the outer segment and inner segment and also observed in the outer plexiform layer, inner plexiform layer, and ganglion cell layer of the retinas. Isoform 1: Expressed in the retina (at protein level). Isoform 5: Expressed in the retina (at protein level). Expressed in the brain. Expressed in the testis (at protein level). Expressed in kidney (at protein level).

The protein resides in the golgi apparatus. The protein localises to the cytoplasm. It localises to the cytoskeleton. It is found in the microtubule organizing center. Its subcellular location is the centrosome. The protein resides in the cell projection. The protein localises to the cilium. It localises to the cilium basal body. It is found in the cilium axoneme. Its subcellular location is the flagellum axoneme. Acts as a guanine-nucleotide releasing factor (GEF) for RAB8A and RAB37 by promoting the conversion of inactive RAB-GDP to the active form RAB-GTP. GEF activity towards RAB8A may facilitate ciliary trafficking by modulating ciliary intracellular localization of RAB8A. GEF activity towards RAB37 maintains autophagic homeostasis and retinal function. Involved in photoreceptor integrity. May control cilia formation by regulating actin stress filaments and cell contractility. May be involved in microtubule organization and regulation of transport in primary cilia. Its function is as follows. Isoform 5 may play a critical role in spermatogenesis and in intraflagellar transport processes. The chain is X-linked retinitis pigmentosa GTPase regulator from Mus musculus (Mouse).